We begin with the raw amino-acid sequence, 194 residues long: 7-methyl-GTP pyrophosphatase (194 aa).

Asp71 (proton acceptor) is an active-site residue.

Belongs to the Maf family. YceF subfamily. Requires a divalent metal cation as cofactor.

Its subcellular location is the cytoplasm. The catalysed reaction is N(7)-methyl-GTP + H2O = N(7)-methyl-GMP + diphosphate + H(+). Nucleoside triphosphate pyrophosphatase that hydrolyzes 7-methyl-GTP (m(7)GTP). May have a dual role in cell division arrest and in preventing the incorporation of modified nucleotides into cellular nucleic acids. The chain is 7-methyl-GTP pyrophosphatase from Aromatoleum aromaticum (strain DSM 19018 / LMG 30748 / EbN1) (Azoarcus sp. (strain EbN1)).